Here is a 324-residue protein sequence, read N- to C-terminus: Calpain-2 catalytic subunit (324 aa).

Positions 1-138 (YPNTFWMNPQ…KKADYQVVDD (138 aa)) are domain III. A linker region spans residues 139-153 (EIEADLEENDASEDD). The segment at 158 to 324 (FRRLFAQLAG…LISWLCFSVL (167 aa)) is domain IV. Ca(2+) is bound by residues Ala166, Asp169, Glu171, Glu176, Asp209, Asp211, Ser213, Lys215, Glu220, Asp239, Asp241, Ser243, Thr245, Glu250, Asp282, and Asn285. 2 consecutive EF-hand domains span residues 190 to 224 (DIKS…FYIL) and 226 to 261 (TKIQ…AGFK).

The protein belongs to the peptidase C2 family. In terms of assembly, forms a heterodimer with a small (regulatory) subunit (CAPNS1). Interacts with CPEB3; this leads to cleavage of CPEB3. The cofactor is Ca(2+). As to expression, ubiquitous.

The protein resides in the cytoplasm. It is found in the cell membrane. The catalysed reaction is Broad endopeptidase specificity.. Its activity is regulated as follows. Activated by 200-1000 micromolar concentrations of calcium and inhibited by calpastatin. Calcium-regulated non-lysosomal thiol-protease which catalyzes limited proteolysis of substrates involved in cytoskeletal remodeling and signal transduction. Proteolytically cleaves MYOC at 'Arg-226'. Proteolytically cleaves CPEB3 following neuronal stimulation which abolishes CPEB3 translational repressor activity, leading to translation of CPEB3 target mRNAs. The protein is Calpain-2 catalytic subunit (CAPN2) of Sus scrofa (Pig).